Consider the following 492-residue polypeptide: Probable beta-1,4-xylosyltransferase IRX14H (492 aa).

Over 1-33 (MKLSVFRLSYWNRRGSSFRSSPSLDPSFDGKSP) the chain is Cytoplasmic. A helical; Signal-anchor for type II membrane protein membrane pass occupies residues 34–54 (SSVFWFVIHGLCCLISLILGF). The Lumenal segment spans residues 55-492 (RFSHLVLFFL…FDGVKVSATS (438 aa)). N-linked (GlcNAc...) asparagine glycans are attached at residues asparagine 99, asparagine 196, and asparagine 314. Residues 457-492 (IKEAKSNSKPRVSKSKSYKEKQEPKAFDGVKVSATS) form a disordered region. Positions 473 to 484 (SYKEKQEPKAFD) are enriched in basic and acidic residues.

The protein belongs to the glycosyltransferase 43 family. Expressed in developing interfascicular fibers and xylem cells in stems and developing secondary xylem in roots.

The protein resides in the golgi apparatus membrane. Involved in the synthesis of the hemicellulose glucuronoxylan, a major component of secondary cell walls. Probably involved in the elongation of glucuronoxylan xylosyl backbone. In Arabidopsis thaliana (Mouse-ear cress), this protein is Probable beta-1,4-xylosyltransferase IRX14H (IRX14H).